A 182-amino-acid polypeptide reads, in one-letter code: Peptidyl-tRNA hydrolase (182 aa).

Y14 contacts tRNA. The active-site Proton acceptor is the H19. 3 residues coordinate tRNA: Y65, N67, and N113.

Belongs to the PTH family. Monomer.

It is found in the cytoplasm. It carries out the reaction an N-acyl-L-alpha-aminoacyl-tRNA + H2O = an N-acyl-L-amino acid + a tRNA + H(+). In terms of biological role, hydrolyzes ribosome-free peptidyl-tRNAs (with 1 or more amino acids incorporated), which drop off the ribosome during protein synthesis, or as a result of ribosome stalling. Its function is as follows. Catalyzes the release of premature peptidyl moieties from peptidyl-tRNA molecules trapped in stalled 50S ribosomal subunits, and thus maintains levels of free tRNAs and 50S ribosomes. The polypeptide is Peptidyl-tRNA hydrolase (Rickettsia peacockii (strain Rustic)).